Reading from the N-terminus, the 147-residue chain is Transcription antitermination protein NusB (147 aa).

Belongs to the NusB family.

Functionally, involved in transcription antitermination. Required for transcription of ribosomal RNA (rRNA) genes. Binds specifically to the boxA antiterminator sequence of the ribosomal RNA (rrn) operons. The protein is Transcription antitermination protein NusB of Teredinibacter turnerae (strain ATCC 39867 / T7901).